The primary structure comprises 450 residues: NADP-specific glutamate dehydrogenase (450 aa).

The active site involves Lys111.

Belongs to the Glu/Leu/Phe/Val dehydrogenases family. Homohexamer.

It catalyses the reaction L-glutamate + NADP(+) + H2O = 2-oxoglutarate + NH4(+) + NADPH + H(+). The sequence is that of NADP-specific glutamate dehydrogenase from Hebeloma cylindrosporum.